A 207-amino-acid chain; its full sequence is Thymidylate kinase (207 aa).

The interval 11–49 (EGIDGSGKSTQARRLAEHLRDTGRDPLLTREPGGSPGAE) is disordered. Residue 12 to 19 (GIDGSGKS) participates in ATP binding. Over residues 24–38 (RLAEHLRDTGRDPLL) the composition is skewed to basic and acidic residues.

The protein belongs to the thymidylate kinase family.

It catalyses the reaction dTMP + ATP = dTDP + ADP. Functionally, phosphorylation of dTMP to form dTDP in both de novo and salvage pathways of dTTP synthesis. This Dinoroseobacter shibae (strain DSM 16493 / NCIMB 14021 / DFL 12) protein is Thymidylate kinase.